A 339-amino-acid chain; its full sequence is Probable cytosolic iron-sulfur protein assembly protein CIAO1 (339 aa).

WD repeat units follow at residues 14-53, 59-98, 103-142, 148-187, 192-231, 250-289, and 301-339; these read HPDSRCWFLAWNPSGTLLASCGGDRKIRIWGTEGDSWICK, GHQRTVRKVAWSPCGNYLASASFDATTCIWKKNQDDFECV, GHENEVKSVAWAPSGNLLATCSRDKSVWVWEVDEEDEYEC, SHTQDVKHVVWHPSQELLASASYDDTVKLYQEEGDDWVCC, GHESTVWSIAFDPSGQRLASCSDDRTVRIWRQYLPGNEQG, FHTRTIYDVAWCQLTGALATACGDDAIRVFEEDPGSDPQQ, and AHSQDVNCVAWNPKEPGLLASCSDDGEVAFWEYHQPAGL. An LYR motif; required for interaction with HSC20 motif is present at residues 176-178; sequence LYQ.

The protein belongs to the WD repeat CIA1 family. In terms of assembly, component of the CIA complex. Interacts with CIAO2A and forms a complex with CIAO2B and MMS19; the interactions with CIAO2A and CIAO2B are mutually exclusive. Interacts with CHD1L, ERCC2, IREB2 and POLD1. Component of the MMXD complex, which includes CIAO1, ERCC2, CIAO2B, MMS19 and SLC25A5. Interacts with WT1. Interacts with CIAO3. Interacts (via LYR motif) with HSC20.

Its subcellular location is the cytoplasm. In terms of biological role, key component of the cytosolic iron-sulfur protein assembly (CIA) complex, a multiprotein complex that mediates the incorporation of iron-sulfur cluster into extramitochondrial Fe/S proteins. As a CIA complex component, interacts specifically with CIAO2A or CIAO2B and MMS19 to assist different branches of iron-sulfur protein assembly, depending of its interactors. The complex CIAO1:CIAO2B:MMS19 binds to and facilitates the assembly of most cytosolic-nuclear Fe/S proteins. CIAO1:CIAO2A specifically matures ACO1 and stabilizes IREB2. Seems to specifically modulate the transactivation activity of WT1. As part of the mitotic spindle-associated MMXD complex it may play a role in chromosome segregation. The chain is Probable cytosolic iron-sulfur protein assembly protein CIAO1 from Mus musculus (Mouse).